An 85-amino-acid polypeptide reads, in one-letter code: Large ribosomal subunit protein bL27 (85 aa).

This sequence belongs to the bacterial ribosomal protein bL27 family.

This Variovorax paradoxus (strain S110) protein is Large ribosomal subunit protein bL27.